Consider the following 306-residue polypeptide: Methionyl-tRNA formyltransferase (306 aa).

110–113 (SLLP) provides a ligand contact to (6S)-5,6,7,8-tetrahydrofolate.

The protein belongs to the Fmt family.

The enzyme catalyses L-methionyl-tRNA(fMet) + (6R)-10-formyltetrahydrofolate = N-formyl-L-methionyl-tRNA(fMet) + (6S)-5,6,7,8-tetrahydrofolate + H(+). Functionally, attaches a formyl group to the free amino group of methionyl-tRNA(fMet). The formyl group appears to play a dual role in the initiator identity of N-formylmethionyl-tRNA by promoting its recognition by IF2 and preventing the misappropriation of this tRNA by the elongation apparatus. This chain is Methionyl-tRNA formyltransferase, found in Brucella ovis (strain ATCC 25840 / 63/290 / NCTC 10512).